The chain runs to 209 residues: MLNAIKKNGLVLAIFACASTGLVAVTHYLTKDQIKQQEQAQLLSVLNQVIPHDLHDNELFSSCTLVQAEELGTEQAMPAYIAKINGEPSAIAIEAIAPDGYNGAIKVIVGMKIDGTILGTRVLSHQETPGLGDKIDLRVSDWILSFAGKQVTDSNLDRWKVRKDGGDFDQFTGATITPRAVVKSVKQAVQYVNQNNQALLAQPLNCGGE.

The chain crosses the membrane as a helical span at residues 9–29 (GLVLAIFACASTGLVAVTHYL). Position 175 is an FMN phosphoryl threonine (T175).

It belongs to the RnfG family. As to quaternary structure, the complex is composed of six subunits: RnfA, RnfB, RnfC, RnfD, RnfE and RnfG. The cofactor is FMN.

It is found in the cell inner membrane. Part of a membrane-bound complex that couples electron transfer with translocation of ions across the membrane. The sequence is that of Ion-translocating oxidoreductase complex subunit G from Vibrio atlanticus (strain LGP32) (Vibrio splendidus (strain Mel32)).